The chain runs to 497 residues: Probable malate:quinone oxidoreductase (497 aa).

This sequence belongs to the MQO family. FAD serves as cofactor.

The catalysed reaction is (S)-malate + a quinone = a quinol + oxaloacetate. It participates in carbohydrate metabolism; tricarboxylic acid cycle; oxaloacetate from (S)-malate (quinone route): step 1/1. The sequence is that of Probable malate:quinone oxidoreductase from Wolinella succinogenes (strain ATCC 29543 / DSM 1740 / CCUG 13145 / JCM 31913 / LMG 7466 / NCTC 11488 / FDC 602W) (Vibrio succinogenes).